Reading from the N-terminus, the 201-residue chain is UPF0177 protein YajF (201 aa).

5 helical membrane-spanning segments follow: residues 10 to 30 (TVIL…YVEY), 44 to 64 (ITVN…MLGI), 82 to 102 (ILIL…SQFI), 119 to 139 (VMGS…APIL), and 159 to 179 (FVFS…VFLI).

Belongs to the UPF0177 family.

It is found in the cell membrane. This is UPF0177 protein YajF (yajF) from Lactococcus lactis subsp. lactis (strain IL1403) (Streptococcus lactis).